The sequence spans 88 residues: Small ribosomal subunit protein bS16 (88 aa).

This sequence belongs to the bacterial ribosomal protein bS16 family.

The polypeptide is Small ribosomal subunit protein bS16 (Mesomycoplasma hyopneumoniae (strain 232) (Mycoplasma hyopneumoniae)).